We begin with the raw amino-acid sequence, 84 residues long: Toxin Tst1 (84 aa).

An N-terminal signal peptide occupies residues 1–19 (MKGMILFISCLLLIDIVVG). The region spanning 21–82 (KEGYLMDHEG…VWDRATNKCG (62 aa)) is the LCN-type CS-alpha/beta domain. Intrachain disulfides connect Cys31–Cys81, Cys35–Cys57, Cys43–Cys62, and Cys47–Cys64. Cys81 is modified (cysteine amide).

Expressed by the venom gland.

The protein resides in the secreted. In terms of biological role, beta toxins bind voltage-independently at site-4 of sodium channels (Nav) and shift the voltage of activation toward more negative potentials thereby affecting sodium channel activation and promoting spontaneous and repetitive firing. This toxin is active only on mammals. Is toxic to mice. The sequence is that of Toxin Tst1 from Tityus stigmurus (Brazilian scorpion).